A 238-amino-acid chain; its full sequence is Arginine ABC transporter permease protein ArtQ (238 aa).

Residues 1–14 lie on the Periplasmic side of the membrane; the sequence is MNEFFPLASAAGMT. In terms of domain architecture, ABC transmembrane type-1 spans 11 to 223; that stretch reads AGMTVGLAVC…VITLLSQYIL (213 aa). The helical transmembrane segment at 15–35 threads the bilayer; sequence VGLAVCALIVGLALAMFFAVW. The Cytoplasmic segment spans residues 36–48; sequence ESAKWRPVAWAGS. Residues 49-69 form a helical membrane-spanning segment; the sequence is ALVTILRGLPEILVVLFIYFG. Residues 70 to 98 lie on the Periplasmic side of the membrane; the sequence is SSQLLLTLSDGFTINLGFVQIPVQMDIEN. The helical transmembrane segment at 99 to 119 threads the bilayer; sequence FDVSPFLCGVIALSLLYAAYA. The Cytoplasmic portion of the chain corresponds to 120-168; the sequence is SQTLRGALKAVPVGQWESGQALGLSKSAIFFRLVMPQMWRHALPGLGNQ. Residues 169–189 traverse the membrane as a helical segment; that stretch reads WLVLLKDTALVSLISVNDLML. Residues 190–201 are Periplasmic-facing; sequence QTKSIATRTQEP. Residues 202 to 222 traverse the membrane as a helical segment; that stretch reads FTWYIVAAAIYLVITLLSQYI. Topologically, residues 223–238 are cytoplasmic; it reads LKRIDLRATRFERRPS.

The protein belongs to the binding-protein-dependent transport system permease family. HisMQ subfamily. As to quaternary structure, the complex is composed of two ATP-binding proteins (ArtP), two transmembrane proteins (ArtM and ArtQ) and two solute-binding proteins (ArtJ and ArtI).

It is found in the cell inner membrane. In terms of biological role, part of the ABC transporter complex ArtPIQMJ involved in arginine transport. Probably responsible for the translocation of the substrate across the membrane. The polypeptide is Arginine ABC transporter permease protein ArtQ (artQ) (Escherichia coli O6:H1 (strain CFT073 / ATCC 700928 / UPEC)).